The following is a 379-amino-acid chain: Putative acetyl-CoA C-acetyltransferase VraB (379 aa).

C86 serves as the catalytic Acyl-thioester intermediate. H338 (proton acceptor) is an active-site residue.

This sequence belongs to the thiolase-like superfamily. Thiolase family.

This Staphylococcus aureus (strain Mu3 / ATCC 700698) protein is Putative acetyl-CoA C-acetyltransferase VraB (vraB).